Reading from the N-terminus, the 96-residue chain is UPF0235 protein SO_3356 (96 aa).

The protein belongs to the UPF0235 family.

In Shewanella oneidensis (strain ATCC 700550 / JCM 31522 / CIP 106686 / LMG 19005 / NCIMB 14063 / MR-1), this protein is UPF0235 protein SO_3356.